Here is a 110-residue protein sequence, read N- to C-terminus: MLLKSTTRHIRIFTAEIEGNELQPSDTVLTLDVDPDNEFNWNEEALQKVYRQFDDLVESYAGQELSEYNLRRIGSELEVLLRQMLQAGEISYNLNCRVLNYSMGVPQAVV.

It belongs to the complex I NdhM subunit family. In terms of assembly, NDH-1 can be composed of about 15 different subunits; different subcomplexes with different compositions have been identified which probably have different functions.

The protein localises to the cellular thylakoid membrane. It catalyses the reaction a plastoquinone + NADH + (n+1) H(+)(in) = a plastoquinol + NAD(+) + n H(+)(out). The catalysed reaction is a plastoquinone + NADPH + (n+1) H(+)(in) = a plastoquinol + NADP(+) + n H(+)(out). Functionally, NDH-1 shuttles electrons from an unknown electron donor, via FMN and iron-sulfur (Fe-S) centers, to quinones in the respiratory and/or the photosynthetic chain. The immediate electron acceptor for the enzyme in this species is believed to be plastoquinone. Couples the redox reaction to proton translocation, and thus conserves the redox energy in a proton gradient. Cyanobacterial NDH-1 also plays a role in inorganic carbon-concentration. This chain is NAD(P)H-quinone oxidoreductase subunit M, found in Synechococcus elongatus (strain ATCC 33912 / PCC 7942 / FACHB-805) (Anacystis nidulans R2).